Here is a 155-residue protein sequence, read N- to C-terminus: Ribosome maturation factor RimP (155 aa).

The protein belongs to the RimP family.

Its subcellular location is the cytoplasm. In terms of biological role, required for maturation of 30S ribosomal subunits. The sequence is that of Ribosome maturation factor RimP from Salinibacter ruber (strain DSM 13855 / M31).